Here is a 247-residue protein sequence, read N- to C-terminus: MNVIPCSIKTLKGLYDISGVEVGQHLYWQIGALQIHAQVLITSWVVIAILLGSVIIAVRNPQTIPSGGQNFFEYVLEFIRDLSKAQIGEEYGPWVPFIGTMFLFIFVSNWSGALLPWKIIQLPHGELAAPTNDINTTVALALPTSVAYFYAGLTKKGLGYFRKYIQPTPILLPINILEDFTKPLSLSFRLFGNILADELVVVVLVSLVPSLVPIPVMFLGLFTSGIQALIFATLAAAYIGESMEGHH.

Transmembrane regions (helical) follow at residues 38–58 (QVLI…IIAV), 95–115 (VPFI…GALL), 134–154 (INTT…AGLT), 199–219 (LVVV…VMFL), and 220–240 (GLFT…AYIG).

This sequence belongs to the ATPase A chain family. F-type ATPases have 2 components, CF(1) - the catalytic core - and CF(0) - the membrane proton channel. CF(1) has five subunits: alpha(3), beta(3), gamma(1), delta(1), epsilon(1). CF(0) has four main subunits: a, b, b' and c.

It is found in the plastid. It localises to the chloroplast thylakoid membrane. Its function is as follows. Key component of the proton channel; it plays a direct role in the translocation of protons across the membrane. This Dioscorea elephantipes (Elephant's foot yam) protein is ATP synthase subunit a, chloroplastic.